The sequence spans 205 residues: GTP cyclohydrolase-2 (205 aa).

49–53 (RLHSE) lines the GTP pocket. Cys-54, Cys-65, and Cys-67 together coordinate Zn(2+). Residues Gln-70, 92–94 (EGR), and Thr-114 each bind GTP. Asp-126 (proton acceptor) is an active-site residue. Catalysis depends on Arg-128, which acts as the Nucleophile. GTP contacts are provided by Thr-149 and Lys-154.

The protein belongs to the GTP cyclohydrolase II family. The cofactor is Zn(2+).

It catalyses the reaction GTP + 4 H2O = 2,5-diamino-6-hydroxy-4-(5-phosphoribosylamino)-pyrimidine + formate + 2 phosphate + 3 H(+). The protein operates within cofactor biosynthesis; riboflavin biosynthesis; 5-amino-6-(D-ribitylamino)uracil from GTP: step 1/4. Catalyzes the conversion of GTP to 2,5-diamino-6-ribosylamino-4(3H)-pyrimidinone 5'-phosphate (DARP), formate and pyrophosphate. This is GTP cyclohydrolase-2 from Pseudomonas paraeruginosa (strain DSM 24068 / PA7) (Pseudomonas aeruginosa (strain PA7)).